Consider the following 132-residue polypeptide: Small ribosomal subunit protein uS8 (132 aa).

This sequence belongs to the universal ribosomal protein uS8 family. As to quaternary structure, part of the 30S ribosomal subunit. Contacts proteins S5 and S12.

One of the primary rRNA binding proteins, it binds directly to 16S rRNA central domain where it helps coordinate assembly of the platform of the 30S subunit. The chain is Small ribosomal subunit protein uS8 from Psychrobacter cryohalolentis (strain ATCC BAA-1226 / DSM 17306 / VKM B-2378 / K5).